Reading from the N-terminus, the 316-residue chain is uncharacterized protein (316 aa).

This is an uncharacterized protein from Caenorhabditis elegans.